Reading from the N-terminus, the 163-residue chain is Interleukin-17F (163 aa).

Positions Met-1–Ala-30 are cleaved as a signal peptide. Asn-83 carries an N-linked (GlcNAc...) asparagine glycan. 2 disulfides stabilise this stretch: Cys-102/Cys-152 and Cys-107/Cys-154.

The protein belongs to the IL-17 family. In terms of assembly, homodimer; disulfide-linked. Heterodimer with IL17A (IL17A-IL17F). Forms complexes with IL17RA and IL17RC receptors with 2:1 binding stoichiometry: two receptor chains for one interleukin molecule. IL17F homodimer forms predominantly complexes with IL17RC homodimer, whereas IL17A-IL17F favors complexes with IL17RA-IL17RC. IL17RA and IL17RC chains cannot distinguish between IL17A and IL17F molecules, potentially enabling the formation of topologically distinct complexes. Expressed in T-helper 1 and T-helper 2 cells, basophils and mast cells.

Its subcellular location is the secreted. Effector cytokine of innate and adaptive immune system involved in antimicrobial host defense and maintenance of tissue integrity. IL17A-IL17F signals via IL17RA-IL17RC heterodimeric receptor complex, triggering homotypic interaction of IL17RA and IL17RC chains with TRAF3IP2 adapter through SEFIR domains. This leads to downstream TRAF6-mediated activation of NF-kappa-B and MAPkinase pathways ultimately resulting in transcriptional activation of cytokines, chemokines, antimicrobial peptides and matrix metalloproteinases, with potential strong immune inflammation. IL17A-IL17F is primarily involved in host defense against extracellular bacteria and fungi by inducing neutrophilic inflammation. As signature effector cytokine of T-helper 17 cells (Th17), primarily induces neutrophil activation and recruitment at infection and inflammatory sites. Stimulates the production of antimicrobial beta-defensins DEFB1, DEFB103A, and DEFB104A by mucosal epithelial cells, limiting the entry of microbes through the epithelial barriers. IL17F homodimer can signal via IL17RC homodimeric receptor complex, triggering downstream activation of TRAF6 and NF-kappa-B signaling pathway. Via IL17RC induces transcriptional activation of IL33, a potent cytokine that stimulates group 2 innate lymphoid cells and adaptive T-helper 2 cells involved in pulmonary allergic response to fungi. Likely via IL17RC, promotes sympathetic innervation of peripheral organs by coordinating the communication between gamma-delta T cells and parenchymal cells. Stimulates sympathetic innervation of thermogenic adipose tissue by driving TGFB1 expression. Regulates the composition of intestinal microbiota and immune tolerance by inducing antimicrobial proteins that specifically control the growth of commensal Firmicutes and Bacteroidetes. The protein is Interleukin-17F (IL17F) of Homo sapiens (Human).